The chain runs to 764 residues: Putative wall-associated receptor kinase-like 13 (764 aa).

A signal peptide spans 1–26; sequence MRGNKNYYFLSLLYFLSLPILHFSSC. Topologically, residues 27–379 are extracellular; the sequence is THKCGDIQIP…HRCIDYHIPE (353 aa). N-linked (GlcNAc...) asparagine glycans are attached at residues asparagine 78, asparagine 114, asparagine 121, asparagine 164, asparagine 233, asparagine 238, asparagine 259, and asparagine 283. The atypical EGF-like stretch occupies residues 308-372; the sequence is CTCDNHIASG…CINTSGGHRC (65 aa). 3 disulfides stabilise this stretch: cysteine 310/cysteine 323, cysteine 345/cysteine 363, and cysteine 352/cysteine 372. Asparagine 365 carries N-linked (GlcNAc...) asparagine glycosylation. Residues 380–400 form a helical membrane-spanning segment; sequence VMLGLGAGFFVLIVGGGIWWW. Topologically, residues 401–764 are cytoplasmic; it reads RKLLRKRRMT…SGSTEIARSM (364 aa). Residues 454–728 enclose the Protein kinase domain; that stretch reads FNDNRVIGQG…REVSTALERI (275 aa). Residues 460-468 and lysine 482 contribute to the ATP site; that span reads IGQGGQGTV. Phosphotyrosine is present on tyrosine 527. The active-site Proton acceptor is aspartate 579. A phosphothreonine mark is found at threonine 613 and threonine 618. Tyrosine 626 is modified (phosphotyrosine).

Belongs to the protein kinase superfamily. Ser/Thr protein kinase family.

The protein resides in the membrane. It carries out the reaction L-seryl-[protein] + ATP = O-phospho-L-seryl-[protein] + ADP + H(+). The catalysed reaction is L-threonyl-[protein] + ATP = O-phospho-L-threonyl-[protein] + ADP + H(+). Its function is as follows. Putative serine/threonine-protein kinase that may function as a signaling receptor of extracellular matrix component. This is Putative wall-associated receptor kinase-like 13 (WAKL13) from Arabidopsis thaliana (Mouse-ear cress).